A 388-amino-acid polypeptide reads, in one-letter code: Succinate--CoA ligase [ADP-forming] subunit beta (388 aa).

One can recognise an ATP-grasp domain in the interval 9 to 244 (KQLFADYGLP…PSQEDPREAH (236 aa)). Residues K46, 53-55 (GRG), E99, T102, and E107 contribute to the ATP site. The Mg(2+) site is built by N199 and D213. Residues N264 and 321 to 323 (GIV) each bind substrate.

It belongs to the succinate/malate CoA ligase beta subunit family. As to quaternary structure, heterotetramer of two alpha and two beta subunits. Requires Mg(2+) as cofactor.

The enzyme catalyses succinate + ATP + CoA = succinyl-CoA + ADP + phosphate. It carries out the reaction GTP + succinate + CoA = succinyl-CoA + GDP + phosphate. Its pathway is carbohydrate metabolism; tricarboxylic acid cycle; succinate from succinyl-CoA (ligase route): step 1/1. Its function is as follows. Succinyl-CoA synthetase functions in the citric acid cycle (TCA), coupling the hydrolysis of succinyl-CoA to the synthesis of either ATP or GTP and thus represents the only step of substrate-level phosphorylation in the TCA. The beta subunit provides nucleotide specificity of the enzyme and binds the substrate succinate, while the binding sites for coenzyme A and phosphate are found in the alpha subunit. The chain is Succinate--CoA ligase [ADP-forming] subunit beta from Hahella chejuensis (strain KCTC 2396).